We begin with the raw amino-acid sequence, 305 residues long: UPF0612 protein C337.02c (305 aa).

Coiled coils occupy residues 27–63 and 120–207; these read IERY…MKYE and NDMN…DARS.

The protein belongs to the UPF0612 family.

The polypeptide is UPF0612 protein C337.02c (Schizosaccharomyces pombe (strain 972 / ATCC 24843) (Fission yeast)).